We begin with the raw amino-acid sequence, 366 residues long: DNA-directed RNA polymerase II subunit GRINL1A (366 aa).

Positions 1–23 are disordered; sequence MFSLPRGFEPPAPEDLGRQSSAE. The stretch at 15-39 forms a coiled coil; sequence DLGRQSSAELRERLRRQERLLRNEK. The interval 29–68 is important for transcription repressor activity; the sequence is RRQERLLRNEKFICKLPDKGKKISDTVAKLKAAISEREEV. Disordered stretches follow at residues 88 to 140, 158 to 182, 201 to 225, and 237 to 280; these read ATTR…HRGN, IRAR…QEEE, ADQS…ETPK, and ARNP…RRAR. Positions 90–100 are enriched in basic and acidic residues; that stretch reads TRADTDVDKAQ. Residues 101–127 show a composition bias toward low complexity; it reads SSDLMLDTSSLDPDCSSIDIKSSKSTS. An interaction with Pol II region spans residues 225–296; that stretch reads KKPHYMKVLE…TAARLLPLHH (72 aa). Polar residues predominate over residues 251 to 272; the sequence is VLPTQQSDSPSHCQRGQSPASS. A Phosphoserine modification is found at S268. Residues 297–312 form an important for transcription repressor activity region; it reads LPAQLLSIEESLALQR. Residues 299–333 are a coiled coil; the sequence is AQLLSIEESLALQREQKQNYEEMQAKLAAQKLAER. The tract at residues 313 to 338 is interaction with Pol II; sequence EQKQNYEEMQAKLAAQKLAERLNIKM. The tract at residues 338–366 is disordered; the sequence is MQSYNPEGESSGRYREVRDEADAQSSDEC. Basic and acidic residues predominate over residues 347–358; the sequence is SSGRYREVRDEA.

The protein belongs to the GRINL1 family. In terms of assembly, component of the Pol II(G) complex, which contains the RNA polymerase II (Pol II) core complex subunits and POLR2M isoform 1. Pol II(G) appears to be an abundant form of Pol II. Dephosphorylated at Ser-268 by the PNUTS-PP1 complex, promoting RNA polymerase II transcription pause-release.

It localises to the nucleus. Its function is as follows. Appears to be a stable component of the Pol II(G) complex form of RNA polymerase II (Pol II). Pol II synthesizes mRNA precursors and many functional non-coding RNAs and is the central component of the basal RNA polymerase II transcription machinery. May play a role in the Mediator complex-dependent regulation of transcription activation. Acts as a negative regulator of transcriptional activation; this repression is relieved by the Mediator complex, which restores Pol II(G) activator-dependent transcription to a level equivalent to that of Pol II. This chain is DNA-directed RNA polymerase II subunit GRINL1A (Polr2m), found in Mus musculus (Mouse).